Here is a 37-residue protein sequence, read N- to C-terminus: Large ribosomal subunit protein bL36 (37 aa).

It belongs to the bacterial ribosomal protein bL36 family.

The protein is Large ribosomal subunit protein bL36 of Maridesulfovibrio salexigens (strain ATCC 14822 / DSM 2638 / NCIMB 8403 / VKM B-1763) (Desulfovibrio salexigens).